A 398-amino-acid chain; its full sequence is Acetate kinase (398 aa).

Asn-7 contacts Mg(2+). Lys-14 contacts ATP. Arg-90 contacts substrate. Asp-147 serves as the catalytic Proton donor/acceptor. Residues 207 to 211, 282 to 284, and 330 to 334 contribute to the ATP site; these read HLGNG, DMR, and GIGEN. Position 383 (Glu-383) interacts with Mg(2+).

It belongs to the acetokinase family. As to quaternary structure, homodimer. Mg(2+) serves as cofactor. Requires Mn(2+) as cofactor.

The protein localises to the cytoplasm. The enzyme catalyses acetate + ATP = acetyl phosphate + ADP. It functions in the pathway metabolic intermediate biosynthesis; acetyl-CoA biosynthesis; acetyl-CoA from acetate: step 1/2. In terms of biological role, catalyzes the formation of acetyl phosphate from acetate and ATP. Can also catalyze the reverse reaction. This is Acetate kinase from Symbiobacterium thermophilum (strain DSM 24528 / JCM 14929 / IAM 14863 / T).